A 59-amino-acid polypeptide reads, in one-letter code: Small, acid-soluble spore protein H (59 aa).

The protein belongs to the SspH family.

It localises to the spore core. This is Small, acid-soluble spore protein H from Bacillus thuringiensis subsp. konkukian (strain 97-27).